The chain runs to 280 residues: MRSPQLSCSASEGRAVEAALSVEHAGGRSMLRRQHVGYPLHVTRGFYLDAARPDLLTLYLQSASGGLYAGDRIGLDLSVARGAAFHLTTQSATVVRDGRGRGAVQRLAVNVEAGAFCAVTSDPYVLFPGAELALASEATVADDAVLCMADGFAVHDPHARGRSFTEFSSRLRIRRPDGRLLLQDAGRISGEDLQGALGRFAAAANLVLIAPPDRLPPVKELQQAADRCGALAGASAAPNESGLVLRVLASDGGTLSCAMEAAFHVAAAGALGVALARRRK.

This sequence belongs to the UreD family. As to quaternary structure, ureD, UreF and UreG form a complex that acts as a GTP-hydrolysis-dependent molecular chaperone, activating the urease apoprotein by helping to assemble the nickel containing metallocenter of UreC. The UreE protein probably delivers the nickel.

The protein resides in the cytoplasm. Required for maturation of urease via the functional incorporation of the urease nickel metallocenter. The protein is Urease accessory protein UreD 1 of Bradyrhizobium sp. (strain BTAi1 / ATCC BAA-1182).